The following is a 350-amino-acid chain: tRNA uridine(34) hydroxylase (350 aa).

The Rhodanese domain maps to 128-221; that stretch reads EETDYVMIDT…YMKEYPNDQF (94 aa). The active-site Cysteine persulfide intermediate is cysteine 181.

This sequence belongs to the TrhO family.

It carries out the reaction uridine(34) in tRNA + AH2 + O2 = 5-hydroxyuridine(34) in tRNA + A + H2O. Functionally, catalyzes oxygen-dependent 5-hydroxyuridine (ho5U) modification at position 34 in tRNAs. In Bdellovibrio bacteriovorus (strain ATCC 15356 / DSM 50701 / NCIMB 9529 / HD100), this protein is tRNA uridine(34) hydroxylase.